Consider the following 206-residue polypeptide: Translation machinery-associated protein 22 (206 aa).

One can recognise an SUI1 domain in the interval 98–169 (VVIKREARTK…EVEKYIHSLL (72 aa)). A disordered region spans residues 184-206 (SQKKKKKPTDEANSNNNNNNNNK). Positions 196–206 (NSNNNNNNNNK) are enriched in low complexity.

The protein belongs to the DENR family. In terms of assembly, interacts with the 40S ribosomal subunit.

It localises to the cytoplasm. The chain is Translation machinery-associated protein 22 (TMA22) from Vanderwaltozyma polyspora (strain ATCC 22028 / DSM 70294 / BCRC 21397 / CBS 2163 / NBRC 10782 / NRRL Y-8283 / UCD 57-17) (Kluyveromyces polysporus).